The primary structure comprises 354 residues: Protein sex-lethal (354 aa).

The tract at residues 1–20 (MYGNNNPGSNNNNGGYPPYG) is disordered. RRM domains follow at residues 127-205 (TNLI…YARP) and 213-293 (TNLY…LAQE).

As to quaternary structure, part of a complex containing fl(2)d, Sxl and vir. Interacts with nito. Interacts with Unr; cooperates with Sxl to prevent translation of msl-2 transcripts. Interacts with how; promoting nuclear retention of msl-2 transcripts. As to expression, the embryo-specific isoform is not expressed in the pole cells, which are the progenitors of the germline.

The protein resides in the nucleus. The protein localises to the cytoplasm. Sex determination switch protein, which controls sexual development and dosage compensation in females. Sxl protein is only active in females: it is inactive in males throughout development. Acts as a mRNA-binding protein, which specifically binds to a subset of pre-mRNAs and mRNAs and regulates their processing and/or translation. Promotes sexual development by controlling the female-specific alternative splicing of the transformer (tra) pre-mRNA: binds tightly to a characteristic uridine-rich polypyrimidine tract at the non-sex specific 3' splice site in one of the tra introns, preventing the general splicing factor U2AF from binding to this site and forcing it to bind to the female-specific 3' splice site. Acts as an inhibitor of dosage compensation in females by preventing production of msl-2 protein, an essential component of the MSL complex, the complex that mediates X-chromosome dosage compensation. Specifially binds to uridine stretches in both the 5'- and 3'-UTR of msl-2 transcripts. Sxl first acts at the splicing level by promoting retention of an intron in the 5' UTR of msl-2 pre-mRNA. The retained intron contains Sxl-binding sites that are required for subsequent steps of repression: after msl-2 mRNA export into the cytoplasm, Sxl coordinates its translational repression by targeting early steps of translation initiation. Together with how, Sxl also prevents production of msl-2 protein by preventing nuclear export of msl-2 transcripts. The sequence is that of Protein sex-lethal from Drosophila subobscura (Fruit fly).